A 354-amino-acid polypeptide reads, in one-letter code: Sulfate permease CysP (354 aa).

8 consecutive transmembrane segments (helical) span residues 3 to 23, 40 to 60, 77 to 97, 125 to 145, 164 to 184, 197 to 217, 293 to 313, and 320 to 340; these read LAAI…GAAA, ALIL…GEVV, IVCI…LLGI, LIIV…TYFV, ILGI…GMNN, VLDV…GALL, VWIV…SLFL, and IFIM…TKAI.

This sequence belongs to the inorganic phosphate transporter (PiT) (TC 2.A.20) family.

It is found in the cell membrane. Involved in the import of sulfate. This chain is Sulfate permease CysP (cysP), found in Bacillus subtilis (strain 168).